A 742-amino-acid chain; its full sequence is Two pore calcium channel protein 1 (742 aa).

The tract at residues 1–37 (MSEAEAPLITEEAAERGLASSGSRRLSDGAGGQGSRK) is disordered. Residues 1–82 (MSEAEAPLIT…NDTRFGRAMS (82 aa)) are Cytoplasmic-facing. A helical membrane pass occupies residues 83 to 103 (FYFVYLRLDWLWSLNLFALIL). The Extracellular segment spans residues 104 to 140 (LNFLEKPLWCRKDALQAYDQRDLYFLGQLPYFSKTES). The chain crosses the membrane as a helical span at residues 141 to 161 (LIYEGLTLVILVMDIFCPLSY). Over 162–176 (EGLNIFWRSTTNKLK) the chain is Cytoplasmic. A helical membrane pass occupies residues 177-197 (IVLLFILACDILVFAFSSQPF). Residues 198-204 (RLAPYIR) lie on the Extracellular side of the membrane. Residues 205–226 (VVFLIMTIRELRMCAITLAGLI) traverse the membrane as a helical; Voltage-sensor segment. Residues 227-247 (GTYLNVLALSLLFLLFASWLA) form a helical membrane-spanning segment. At 248–258 (YVTFEDTPQGK) the chain is on the extracellular side. Positions 259-273 (TIFSSYGVTLYQMFV) form an intramembrane region, pore-forming. The Extracellular portion of the chain corresponds to 274–296 (LFTTSNNPDVWVHAYKIPRWYSL). A helical membrane pass occupies residues 297 to 317 (FFIVYVLLGVYFLTNLILAVI). The Cytoplasmic portion of the chain corresponds to 318-446 (YDSFKEQFAK…SFVRSRMFEY (129 aa)). 2 EF-hand domains span residues 335–370 (IRKNILQKAFDLIDTNNRGYLDREQCISLLNELNKY) and 376–411 (TSREDFELIFAELDRSGDFKVTSEEFADLCNTIAIK). A helical transmembrane segment spans residues 447 to 467 (IIVFVLLINLVAVIIETTLDI). Residues 468–480 (ENSSSQETWQEVE) lie on the Extracellular side of the membrane. N-linked (GlcNAc...) asparagine glycosylation is present at Asn469. Residues 481–501 (FFLGWIYVAEMALKIFSLGFG) traverse the membrane as a helical segment. Residues 502-510 (AYWMEGQNK) are Cytoplasmic-facing. The helical transmembrane segment at 511–531 (FDFVLTWTIFIGETLTFAFPS) threads the bilayer. Topologically, residues 532–540 (KLPFLSNGE) are extracellular. Residues 541–558 (WIRYLLLGRVLRLTRILL) form a helical; Voltage-sensor membrane-spanning segment. Residues 559 to 582 (QVQRFRAFVATFFTLMSSLMPYLG) lie on the Cytoplasmic side of the membrane. The helical transmembrane segment at 583-603 (IVFCVLCMYCSIGLQIFGGIV) threads the bilayer. The Extracellular portion of the chain corresponds to 604-627 (YAGNPTLEETDLFNNDYLLFNFND). The segment at residues 628–642 (YPSGMVTLFNLLVMG) is an intramembrane region (pore-forming). Topologically, residues 643–663 (NWQVWMESYWQLTGTSWSLIY) are extracellular. The helical transmembrane segment at 664-684 (FVSFYLISILLLLNLIVAFVL) threads the bilayer. The Cytoplasmic portion of the chain corresponds to 685–742 (EAFFAEMELEKGEEVDIQNPTSGGIKKRRSMRVRSKGTMVDILLHHMLSNELDGSQNS).

It belongs to the calcium channel alpha-1 subunit (TC 1.A.1.11) family. Two pore calcium channel subfamily. In terms of assembly, homodimer.

The protein localises to the membrane. Inhibited by Al(3+). Functions as a voltage-gated inward-rectifying Ca(2+) channel (VDCC) across the plasma membrane that mediates sucrose-induced Ca(2+) influx in autotrophically grown leaf cells. Acts as the major ROS-responsive Ca(2+) channel and is the possible target of Al-dependent inhibition. Plays a regulatory role in defense responses. This Triticum aestivum (Wheat) protein is Two pore calcium channel protein 1 (TPC1).